The primary structure comprises 427 residues: Ectoine TRAP transporter large permease protein TeaC (427 aa).

12 helical membrane passes run 13 to 35 (LLLGFPMMIPLATASIIGFFMMF), 49 to 69 (MAGIRPASLIAVPMFILAADI), 79 to 99 (LINMVMAFIGHIKGGLAVSTA), 103 to 123 (TLFGAVSGSTQATVVAVGSPL), 147 to 167 (IAFLIPPSIGMIIYGIISGTS), 172 to 192 (FIAGIGPGLMILVMFAIYCVI), 216 to 236 (LALWPLGFPVIIIGGIYGGIF), 237 to 257 (SPTEAAAACVLYAVLLEFVVF), 273 to 293 (GLITAVVFILVAVGNSFSWII), 320 to 340 (ICVAFFVACMFVDPIVVILVL), 356 to 376 (VLVGILITLQVAIGSATPPFG), and 400 to 420 (FIFMLVLAAALLILFPQIALF).

Belongs to the TRAP transporter large permease family. As to quaternary structure, the complex comprises the extracytoplasmic solute receptor protein TeaA, and the two transmembrane proteins TeaB and TeaC.

The protein resides in the cell inner membrane. Functionally, part of the tripartite ATP-independent periplasmic (TRAP) transport system TeaABC involved in the uptake of ectoine and hydroxyectoine in response to osmotic upshock. Probably functions as a recovery system for synthesized ectoine that leaks out of the cell. This chain is Ectoine TRAP transporter large permease protein TeaC (teaC), found in Halomonas elongata (strain ATCC 33173 / DSM 2581 / NBRC 15536 / NCIMB 2198 / 1H9).